Reading from the N-terminus, the 350-residue chain is Decarboxylase iboD (350 aa).

This sequence belongs to the phosphatidylserine decarboxylase family.

The protein operates within secondary metabolite biosynthesis. Functionally, decarboxylase; part of the gene cluster that mediates the biosynthesis of the psychoactive metabolites ibotenic acid and muscimol. The first committed step is glutamate hydroxylation by the 2-oxoglutarate-dependent dioxygenase iboH, and the last step is decarboxylation of ibotenic acid to muscimol by the decarboxylase iboD. The order of the intermediate reactions is somewhat ambiguous. IboA likely activates the carboxylic acid at position 5 to introduce an amide bond, and the flavin monooxygenase iboF generates the N-O bond. There are several options for the latter step. One option is that iboF directly hydroxylates the amide nitrogen formed by iboA to produce a hydroxamic acid species. Another option is that iboF hydroxylates an external N-containing compound, whose resulting N-O bond is subsequently introduced into the hydroxyglutamate scaffold. The paralogous PLP-dependent cystathionine gamma-synthase-like enzymes iboG1 and iboG2 are likely involved in substitution of the OH group at position 3 by the O-N moiety. The first cyclic intermediate is most probably tricholomic acid which is likely desaturated to ibotenic acid by the cytochrome P450 monooxygenase iboC. This is Decarboxylase iboD from Amanita muscaria (strain Koide BX008).